Reading from the N-terminus, the 447-residue chain is Phosphoglucosamine mutase (447 aa).

Residue Ser-100 is the Phosphoserine intermediate of the active site. The Mg(2+) site is built by Ser-100, Asp-239, Asp-241, and Asp-243. Phosphoserine is present on Ser-100.

It belongs to the phosphohexose mutase family. Mg(2+) serves as cofactor. Activated by phosphorylation.

It catalyses the reaction alpha-D-glucosamine 1-phosphate = D-glucosamine 6-phosphate. In terms of biological role, catalyzes the conversion of glucosamine-6-phosphate to glucosamine-1-phosphate. The polypeptide is Phosphoglucosamine mutase (Halalkalibacterium halodurans (strain ATCC BAA-125 / DSM 18197 / FERM 7344 / JCM 9153 / C-125) (Bacillus halodurans)).